The primary structure comprises 262 residues: Zinc finger protein 138 (262 aa).

The segment at 110 to 132 (FRCKECDKSLCMLSRLTQHKKIH) adopts a C2H2-type 1 zinc-finger fold. A C2H2-type 2; degenerate zinc finger spans residues 138 to 160 (YKCEECGKTFNWSTNLSKPKKIH). The segment at 166–188 (YKCEVCGKAFHQSSILTKHKIIR) adopts a C2H2-type 3; degenerate zinc-finger fold. The C2H2-type 4 zinc finger occupies 194–216 (YKCAHCGKAFKQSSHLTRHKIIH). The segment at 222-244 (YKCEQCGKVFKQSPTLTKHQIIY) adopts a C2H2-type 5; degenerate zinc-finger fold. Residues 250–262 (YKCEECGKAFNLS) form a C2H2-type 6; degenerate zinc finger.

This sequence belongs to the krueppel C2H2-type zinc-finger protein family.

Its subcellular location is the nucleus. May be involved in transcriptional regulation as a repressor. This Homo sapiens (Human) protein is Zinc finger protein 138 (ZNF138).